Here is a 117-residue protein sequence, read N- to C-terminus: Large ribosomal subunit protein bL20 (117 aa).

It belongs to the bacterial ribosomal protein bL20 family.

Binds directly to 23S ribosomal RNA and is necessary for the in vitro assembly process of the 50S ribosomal subunit. It is not involved in the protein synthesizing functions of that subunit. The chain is Large ribosomal subunit protein bL20 from Acetivibrio thermocellus (strain ATCC 27405 / DSM 1237 / JCM 9322 / NBRC 103400 / NCIMB 10682 / NRRL B-4536 / VPI 7372) (Clostridium thermocellum).